Here is a 396-residue protein sequence, read N- to C-terminus: Mannonate dehydratase (396 aa).

Belongs to the mannonate dehydratase family. The cofactor is Fe(2+). Requires Mn(2+) as cofactor.

The catalysed reaction is D-mannonate = 2-dehydro-3-deoxy-D-gluconate + H2O. Its pathway is carbohydrate metabolism; pentose and glucuronate interconversion. Functionally, catalyzes the dehydration of D-mannonate. This Serratia proteamaculans (strain 568) protein is Mannonate dehydratase.